A 64-amino-acid chain; its full sequence is Large ribosomal subunit protein bL33 (64 aa).

A disordered region spans residues Thr-19 to Asn-40.

This sequence belongs to the bacterial ribosomal protein bL33 family.

The polypeptide is Large ribosomal subunit protein bL33 (Prochlorococcus marinus (strain MIT 9215)).